A 360-amino-acid polypeptide reads, in one-letter code: Peptide chain release factor 1 (360 aa).

Q235 carries the N5-methylglutamine modification. Basic and acidic residues predominate over residues 285–295; the sequence is RQAAEQTDMRR. Positions 285 to 309 are disordered; it reads RQAAEQTDMRRNLLGSGDRSDKIRT.

The protein belongs to the prokaryotic/mitochondrial release factor family. In terms of processing, methylated by PrmC. Methylation increases the termination efficiency of RF1.

The protein localises to the cytoplasm. Functionally, peptide chain release factor 1 directs the termination of translation in response to the peptide chain termination codons UAG and UAA. The sequence is that of Peptide chain release factor 1 from Haemophilus influenzae (strain 86-028NP).